The primary structure comprises 396 residues: Acetate kinase (396 aa).

Asn-8 contributes to the Mg(2+) binding site. An ATP-binding site is contributed by Lys-15. Substrate is bound at residue Arg-89. Residue Asp-146 is the Proton donor/acceptor of the active site. Residues 206–210 (HIGNG), 283–285 (DMR), and 331–335 (GVGEN) each bind ATP. Glu-383 serves as a coordination point for Mg(2+).

The protein belongs to the acetokinase family. In terms of assembly, homodimer. Requires Mg(2+) as cofactor. The cofactor is Mn(2+).

It is found in the cytoplasm. The catalysed reaction is acetate + ATP = acetyl phosphate + ADP. Its pathway is metabolic intermediate biosynthesis; acetyl-CoA biosynthesis; acetyl-CoA from acetate: step 1/2. Its function is as follows. Catalyzes the formation of acetyl phosphate from acetate and ATP. Can also catalyze the reverse reaction. This Streptococcus pneumoniae (strain ATCC 700669 / Spain 23F-1) protein is Acetate kinase.